We begin with the raw amino-acid sequence, 182 residues long: ATP synthase subunit delta (182 aa).

The protein belongs to the ATPase delta chain family. In terms of assembly, F-type ATPases have 2 components, F(1) - the catalytic core - and F(0) - the membrane proton channel. F(1) has five subunits: alpha(3), beta(3), gamma(1), delta(1), epsilon(1). F(0) has three main subunits: a(1), b(2) and c(10-14). The alpha and beta chains form an alternating ring which encloses part of the gamma chain. F(1) is attached to F(0) by a central stalk formed by the gamma and epsilon chains, while a peripheral stalk is formed by the delta and b chains.

Its subcellular location is the cell inner membrane. F(1)F(0) ATP synthase produces ATP from ADP in the presence of a proton or sodium gradient. F-type ATPases consist of two structural domains, F(1) containing the extramembraneous catalytic core and F(0) containing the membrane proton channel, linked together by a central stalk and a peripheral stalk. During catalysis, ATP synthesis in the catalytic domain of F(1) is coupled via a rotary mechanism of the central stalk subunits to proton translocation. Its function is as follows. This protein is part of the stalk that links CF(0) to CF(1). It either transmits conformational changes from CF(0) to CF(1) or is implicated in proton conduction. This chain is ATP synthase subunit delta, found in Persephonella marina (strain DSM 14350 / EX-H1).